Consider the following 477-residue polypeptide: Calcium uptake protein 1, mitochondrial (477 aa).

A mitochondrion-targeting transit peptide spans 1-33; sequence MFRLNALSALAELAVGSRWYHGTSQPTQTKRRL. A disordered region spans residues 55 to 108; the sequence is AHAESPPSVNSKKTDAGDKGKSKDTREVSSHEGSAADTAAEPYPEEKKKKRSGF. Residues 66 to 84 show a composition bias toward basic and acidic residues; the sequence is KKTDAGDKGKSKDTREVSS. Residues 101–112 form a polybasic region region; that stretch reads KKKKRSGFRDRK. Serine 124 carries the phosphoserine modification. A k/R-ring region spans residues 128–131; the sequence is KIFR. One can recognise an EF-hand 1 domain in the interval 220 to 255; it reads TPQRNFEIAFKMFDLNGDGEVDMEEFEQVQSIIRSQ. Ca(2+) contacts are provided by aspartate 233, asparagine 235, aspartate 237, glutamate 239, and glutamate 244. A k/R-ring region spans residues 261 to 265; sequence RHRDR. One can recognise an EF-hand 2; degenerate domain in the interval 356–376; the sequence is KDGKGLTFQEVENFFTFLKNI. The EF-hand 3 domain maps to 410-445; sequence LSDHVCDVVFALFDCDGNGELSNKEFVSIMKQRLMR. Ca(2+)-binding residues include aspartate 423, aspartate 425, asparagine 427, glutamate 429, and glutamate 434. Residue arginine 457 is modified to Asymmetric dimethylarginine. Residues 457–467 form a C-helix region region; the sequence is RLMQAMWKCAQ.

This sequence belongs to the MICU1 family. MICU1 subfamily. As to quaternary structure, heterodimer; disulfide-linked; heterodimerizes with MICU2 or MICU3. Homodimer; disulfide-linked. Component of the uniplex complex, composed of MCU, EMRE/SMDT1, MICU1 and MICU2 (or MICU3) in a 4:4:1:1 stoichiometry. The composition of calcium sensors within the uniplex complex can differ depending on tissues: a MICU1 homodimer can be present instead of the MICU1-MICU2 heterodimer in skeletal-muscle and kidney. MICU1 is recruited to the uniplex complex by EMRE/SMDT1, and it associates with MCU at low calcium levels, occluding the pore of the MCU channel. Associates with the MICOS complex. Interacts with SLC25A23. Interacts with CHCHD4/MIA40; which introduces the interchain disulfide bond with MICU2. Interacts (when methylated) with UCP2; leading to decrease the calcium sensitivity of MICU1. In terms of processing, phosphorylation at Ser-124 by AKT1 impairs its maturation and stability. Post-translationally, asymmetric dimethylation at Arg-457 by PRMT1 decreases the calcium sensitivity of MICU1 by promoting interaction with UCP2. Degraded by YME1L1 when not complexed as homodimer or heterodimer. Not degraded when complexed as homodimer or heterodimer; the presence of the interchain disulfide bond protecting MICU1 from degradation by YME1L1.

It localises to the mitochondrion intermembrane space. The protein localises to the mitochondrion inner membrane. In terms of biological role, calcium sensor of the mitochondrial calcium uniporter (MCU) channel, which senses calcium level via its EF-hand domains. MICU1 and MICU2 (or MICU3) form a disulfide-linked heterodimer that stimulates and inhibits MCU activity, depending on the concentration of calcium. At low calcium levels, MICU1 occludes the pore of the MCU channel, preventing mitochondrial calcium uptake. At higher calcium levels, calcium-binding to MICU1 and MICU2 (or MICU3) induces a conformational change that weakens MCU-MICU1 interactions and moves the MICU1-MICU2 heterodimer away from the pore, allowing calcium permeation through the MCU channel. Also required to protect against manganese toxicity by preventing manganese uptake by MCU: mechanistically, manganese-binding to its EF-hand domains does not induce any conformational change, maintaining MCU pore occlusion. Acts as a regulator of mitochondrial cristae structure independently of its ability to regulate the mitochondrial calcium uniporter channel. Regulates glucose-dependent insulin secretion in pancreatic beta-cells by regulating mitochondrial calcium uptake. Induces T-helper 1-mediated autoreactivity, which is accompanied by the release of IFNG. The polypeptide is Calcium uptake protein 1, mitochondrial (Micu1) (Rattus norvegicus (Rat)).